Reading from the N-terminus, the 418-residue chain is Pyruvate decarboxylase 1 (418 aa).

H59 is a substrate binding site. A thiamine pyrophosphate binding region spans residues 337-418; the sequence is DSWFNCQKLK…IFLINNGGYT (82 aa). Mg(2+)-binding residues include D387, N414, and G416.

This sequence belongs to the TPP enzyme family. In terms of assembly, homotetramer. A metal cation is required as a cofactor. The cofactor is thiamine diphosphate. In terms of tissue distribution, leaves.

It catalyses the reaction a 2-oxocarboxylate + H(+) = an aldehyde + CO2. The sequence is that of Pyruvate decarboxylase 1 (PDC1) from Nicotiana tabacum (Common tobacco).